The chain runs to 81 residues: Large ribosomal subunit protein uL29c (81 aa).

The protein belongs to the universal ribosomal protein uL29 family.

It localises to the plastid. The protein localises to the chloroplast. The polypeptide is Large ribosomal subunit protein uL29c (Phaeodactylum tricornutum (strain CCAP 1055/1)).